The following is a 228-amino-acid chain: DNA mismatch repair protein MutH (228 aa).

The protein belongs to the MutH family.

It is found in the cytoplasm. In terms of biological role, sequence-specific endonuclease that cleaves unmethylated GATC sequences. It is involved in DNA mismatch repair. This chain is DNA mismatch repair protein MutH, found in Serratia proteamaculans (strain 568).